The chain runs to 124 residues: S-adenosylmethionine decarboxylase proenzyme (124 aa).

Catalysis depends on Ser63, which acts as the Schiff-base intermediate with substrate; via pyruvic acid. Ser63 carries the post-translational modification Pyruvic acid (Ser); by autocatalysis. His68 (proton acceptor; for processing activity) is an active-site residue. Cys83 functions as the Proton donor; for catalytic activity in the catalytic mechanism.

This sequence belongs to the prokaryotic AdoMetDC family. Type 1 subfamily. As to quaternary structure, heterotetramer of two alpha and two beta chains arranged as a dimer of alpha/beta heterodimers. The cofactor is pyruvate. Post-translationally, is synthesized initially as an inactive proenzyme. Formation of the active enzyme involves a self-maturation process in which the active site pyruvoyl group is generated from an internal serine residue via an autocatalytic post-translational modification. Two non-identical subunits are generated from the proenzyme in this reaction, and the pyruvate is formed at the N-terminus of the alpha chain, which is derived from the carboxyl end of the proenzyme. The post-translation cleavage follows an unusual pathway, termed non-hydrolytic serinolysis, in which the side chain hydroxyl group of the serine supplies its oxygen atom to form the C-terminus of the beta chain, while the remainder of the serine residue undergoes an oxidative deamination to produce ammonia and the pyruvoyl group blocking the N-terminus of the alpha chain.

It catalyses the reaction S-adenosyl-L-methionine + H(+) = S-adenosyl 3-(methylsulfanyl)propylamine + CO2. It functions in the pathway amine and polyamine biosynthesis; S-adenosylmethioninamine biosynthesis; S-adenosylmethioninamine from S-adenosyl-L-methionine: step 1/1. Catalyzes the decarboxylation of S-adenosylmethionine to S-adenosylmethioninamine (dcAdoMet), the propylamine donor required for the synthesis of the polyamines spermine and spermidine from the diamine putrescine. The protein is S-adenosylmethionine decarboxylase proenzyme of Caldicellulosiruptor bescii (strain ATCC BAA-1888 / DSM 6725 / KCTC 15123 / Z-1320) (Anaerocellum thermophilum).